We begin with the raw amino-acid sequence, 189 residues long: Phosphoheptose isomerase (189 aa).

One can recognise an SIS domain in the interval leucine 34 to glycine 189. Substrate is bound at residue asparagine 49–glycine 51. 2 residues coordinate Zn(2+): histidine 58 and glutamate 62. Substrate contacts are provided by residues glutamate 62, asparagine 91–aspartate 92, serine 117–serine 119, serine 122, and glutamine 169. Glutamine 169 and histidine 177 together coordinate Zn(2+).

The protein belongs to the SIS family. GmhA subfamily. In terms of assembly, homotetramer. Zn(2+) serves as cofactor.

The protein resides in the cytoplasm. It catalyses the reaction 2 D-sedoheptulose 7-phosphate = D-glycero-alpha-D-manno-heptose 7-phosphate + D-glycero-beta-D-manno-heptose 7-phosphate. Its pathway is carbohydrate biosynthesis; D-glycero-D-manno-heptose 7-phosphate biosynthesis; D-glycero-alpha-D-manno-heptose 7-phosphate and D-glycero-beta-D-manno-heptose 7-phosphate from sedoheptulose 7-phosphate: step 1/1. Catalyzes the isomerization of sedoheptulose 7-phosphate in D-glycero-D-manno-heptose 7-phosphate. The polypeptide is Phosphoheptose isomerase (Geotalea uraniireducens (strain Rf4) (Geobacter uraniireducens)).